A 290-amino-acid polypeptide reads, in one-letter code: 2-dehydro-3-deoxy-phosphogluconate/2-dehydro-3-deoxy-6-phosphogalactonate aldolase (290 aa).

Substrate is bound by residues 42–43 (TT), 129–131 (YNY), and 155–157 (KDT). Residue K155 is the Schiff-base intermediate with substrate of the active site.

The protein belongs to the DapA family. KDPG aldolase subfamily. Homotetramer; dimer of dimers.

The catalysed reaction is 2-dehydro-3-deoxy-6-phospho-D-gluconate = D-glyceraldehyde 3-phosphate + pyruvate. It catalyses the reaction 2-dehydro-3-deoxy-6-phospho-D-galactonate = D-glyceraldehyde 3-phosphate + pyruvate. The protein operates within carbohydrate acid metabolism; 2-dehydro-3-deoxy-D-gluconate degradation; D-glyceraldehyde 3-phosphate and pyruvate from 2-dehydro-3-deoxy-D-gluconate: step 2/2. Functionally, involved in the degradation of glucose and galactose via the Entner-Doudoroff pathway. Catalyzes the reversible cleavage of 2-keto-3-deoxy-6-phosphogluconate (KDPG) and 2-keto-3-deoxygluconate (KDG) forming pyruvate and glyceraldehyde 3-phosphate or glyceraldehyde, respectively. It is also able to catalyze the reversible cleavage of 2-keto-3-deoxy-6-phosphogalactonate (KDPGal) and 2-keto-3-deoxygalactonate (KDGal). The polypeptide is 2-dehydro-3-deoxy-phosphogluconate/2-dehydro-3-deoxy-6-phosphogalactonate aldolase (kdgA) (Sulfurisphaera tokodaii (strain DSM 16993 / JCM 10545 / NBRC 100140 / 7) (Sulfolobus tokodaii)).